The sequence spans 427 residues: Serine protease HTRA2, mitochondrial (427 aa).

The tract at residues 33–57 (HTASSSKGSGGDNSKDQENNGQNKS) is disordered. The chain crosses the membrane as a helical span at residues 67-87 (VFQFCVPFSLGALVSAVLIEG). Residues 78 to 81 (ALVS) carry the IAP-binding motif. The segment at 144–307 (SNGSGFVIEQ…IPIDYVKVFL (164 aa)) is serine protease. Active-site charge relay system residues include histidine 162, aspartate 194, and serine 271. The region spanning 330–415 (MGITMLTLTP…DLEIVILRGV (86 aa)) is the PDZ domain.

The protein belongs to the peptidase S1C family. In terms of assembly, interacts with th/DIAP1 (via BIR 2 domain).

Its subcellular location is the mitochondrion intermembrane space. The protein resides in the mitochondrion membrane. The enzyme catalyses Cleavage of non-polar aliphatic amino-acids at the P1 position, with a preference for Val, Ile and Met. At the P2 and P3 positions, Arg is selected most strongly with a secondary preference for other hydrophilic residues.. In terms of biological role, serine protease that shows proteolytic activity against a non-specific substrate beta-casein. Promotes or induces cell death either by direct binding to and inhibition of BIRC proteins (also called inhibitor of apoptosis proteins, IAPs), leading to an increase in caspase activity, or by a BIRC inhibition-independent, caspase-independent and serine protease activity-dependent mechanism. Can antagonize antiapoptotic activity of th/Diap1 by directly inducing the degradation of th/Diap1. The polypeptide is Serine protease HTRA2, mitochondrial (Drosophila persimilis (Fruit fly)).